We begin with the raw amino-acid sequence, 354 residues long: Uroporphyrinogen decarboxylase (354 aa).

Residues 27–31 (RQAGR), phenylalanine 46, aspartate 77, tyrosine 154, threonine 209, and histidine 327 each bind substrate.

This sequence belongs to the uroporphyrinogen decarboxylase family. As to quaternary structure, homodimer.

Its subcellular location is the cytoplasm. It catalyses the reaction uroporphyrinogen III + 4 H(+) = coproporphyrinogen III + 4 CO2. It participates in porphyrin-containing compound metabolism; protoporphyrin-IX biosynthesis; coproporphyrinogen-III from 5-aminolevulinate: step 4/4. Its function is as follows. Catalyzes the decarboxylation of four acetate groups of uroporphyrinogen-III to yield coproporphyrinogen-III. In Escherichia coli O157:H7, this protein is Uroporphyrinogen decarboxylase.